The chain runs to 210 residues: 3-oxo-tetronate 4-phosphate decarboxylase (210 aa).

Glu74 functions as the Proton acceptor in the catalytic mechanism. Glu74, His93, and His95 together coordinate Zn(2+). The Proton donor role is filled by Tyr120. A Zn(2+)-binding site is contributed by His160.

It belongs to the aldolase class II family. AraD/FucA subfamily. Zn(2+) serves as cofactor.

It carries out the reaction 3-dehydro-4-O-phospho-D-erythronate + H(+) = dihydroxyacetone phosphate + CO2. It catalyses the reaction 3-dehydro-4-O-phospho-L-erythronate + H(+) = dihydroxyacetone phosphate + CO2. Catalyzes the decarboxylation of 3-oxo-tetronate 4-phosphate to dihydroxyacetone phosphate (DHAP) and CO(2). This chain is 3-oxo-tetronate 4-phosphate decarboxylase, found in Haemophilus influenzae (strain ATCC 51907 / DSM 11121 / KW20 / Rd).